We begin with the raw amino-acid sequence, 103 residues long: Ig kappa-b5 chain C region (103 aa).

In terms of domain architecture, Ig-like spans 5-99 (PTVLIFPPAP…GAGSVVQSFS (95 aa)). The cysteines at positions 26 and 85 are disulfide-linked.

This Oryctolagus cuniculus (Rabbit) protein is Ig kappa-b5 chain C region.